The following is an 83-amino-acid chain: Erabutoxin b (83 aa).

The first 21 residues, 1–21, serve as a signal peptide directing secretion; the sequence is MKTLLLTLVVVTIVCLDLGYT. The segment at 24–38 is loop I; sequence CFNHQSSQPQTTKTC. 4 disulfide bridges follow: Cys24-Cys45, Cys38-Cys62, Cys64-Cys75, and Cys76-Cys81. The segment at 39-44 is stretch between loop I and loop II; it reads SPGESS. The interval 45 to 62 is loop II; sequence CYHKQWSDFRGTIIERGC. The loop III stretch occupies residues 64 to 75; it reads CPTVKPGIKLSC.

This sequence belongs to the three-finger toxin family. Short-chain subfamily. Type I alpha-neurotoxin sub-subfamily. In terms of tissue distribution, expressed by the venom gland.

The protein resides in the secreted. Functionally, binds with high affinity to muscular nicotinic acetylcholine receptors (nAChRs) (tested on Torpedo marmorata, Kd=0.07 nM), and with low affinity to neuronal alpha-7/CHRNA7 nAChRs (tested on chimeric alpha-7/CHRNA7, Kd=22 uM) and inhibit acetylcholine from binding to the receptor, thereby impairing neuromuscular transmission. Produces peripheral paralysis by blocking neuromuscular transmission at the postsynaptic site. This Laticauda semifasciata (Black-banded sea krait) protein is Erabutoxin b.